The following is a 214-amino-acid chain: MRVRHIPGAKEQLKEYEFYIQDPSQYQNQWHLYFQNQHPIHLEVGLGKGQFLTTLAKVHKNINYLGLEKSQEVLLQALKKLDRQVSRQELSNMGLFHYNALDLNEVFGEGNIEKIYLNFSDPWPKERHKKRRLTHQGFLKIYRGLLSEQGEIQIKTDNKALFEFSLQQLKEENFHFVQVIYNLHNDGIKDPFMTEYEEKFVKAGKTIYKCIATV.

S-adenosyl-L-methionine-binding residues include Glu43, Glu68, Asn99, and Asp121. Residue Asp121 is part of the active site. Substrate contacts are provided by residues Lys125, Asp157, and Thr194–Glu197.

It belongs to the class I-like SAM-binding methyltransferase superfamily. TrmB family.

The enzyme catalyses guanosine(46) in tRNA + S-adenosyl-L-methionine = N(7)-methylguanosine(46) in tRNA + S-adenosyl-L-homocysteine. It participates in tRNA modification; N(7)-methylguanine-tRNA biosynthesis. Catalyzes the formation of N(7)-methylguanine at position 46 (m7G46) in tRNA. The protein is tRNA (guanine-N(7)-)-methyltransferase of Alkaliphilus metalliredigens (strain QYMF).